Reading from the N-terminus, the 117-residue chain is Ribonuclease P protein component (117 aa).

It belongs to the RnpA family. As to quaternary structure, consists of a catalytic RNA component (M1 or rnpB) and a protein subunit.

It catalyses the reaction Endonucleolytic cleavage of RNA, removing 5'-extranucleotides from tRNA precursor.. Functionally, RNaseP catalyzes the removal of the 5'-leader sequence from pre-tRNA to produce the mature 5'-terminus. It can also cleave other RNA substrates such as 4.5S RNA. The protein component plays an auxiliary but essential role in vivo by binding to the 5'-leader sequence and broadening the substrate specificity of the ribozyme. The protein is Ribonuclease P protein component of Thermotoga sp. (strain RQ2).